We begin with the raw amino-acid sequence, 41 residues long: Large ribosomal subunit protein bL36 (41 aa).

This sequence belongs to the bacterial ribosomal protein bL36 family.

This is Large ribosomal subunit protein bL36 from Dinoroseobacter shibae (strain DSM 16493 / NCIMB 14021 / DFL 12).